A 231-amino-acid polypeptide reads, in one-letter code: 7-cyano-7-deazaguanine synthase (231 aa).

8 to 18 (FSGGQDSTTCL) lines the ATP pocket. Residues Cys188, Cys197, Cys200, and Cys203 each coordinate Zn(2+).

It belongs to the QueC family. The cofactor is Zn(2+).

The enzyme catalyses 7-carboxy-7-deazaguanine + NH4(+) + ATP = 7-cyano-7-deazaguanine + ADP + phosphate + H2O + H(+). Its pathway is purine metabolism; 7-cyano-7-deazaguanine biosynthesis. In terms of biological role, catalyzes the ATP-dependent conversion of 7-carboxy-7-deazaguanine (CDG) to 7-cyano-7-deazaguanine (preQ(0)). This chain is 7-cyano-7-deazaguanine synthase, found in Pectobacterium carotovorum subsp. carotovorum (strain PC1).